Reading from the N-terminus, the 524-residue chain is Chromosomal replication initiator protein DnaA (524 aa).

Residues 1 to 72 (MNDFWQHCSA…DLARDFWNAP (72 aa)) are domain I, interacts with DnaA modulators. The interval 72-187 (PIEVQFVLDP…GEADSMYERS (116 aa)) is domain II. Positions 188 to 404 (KLNPVLTFDN…GALRKILAYS (217 aa)) are domain III, AAA+ region. The ATP site is built by Gly-232, Gly-234, Lys-235, and Thr-236. A domain IV, binds dsDNA region spans residues 405–524 (KFHGREISIE…LHVLEQTLKG (120 aa)).

Belongs to the DnaA family. In terms of assembly, oligomerizes as a right-handed, spiral filament on DNA at oriC.

It is found in the cytoplasm. Functionally, plays an essential role in the initiation and regulation of chromosomal replication. ATP-DnaA binds to the origin of replication (oriC) to initiate formation of the DNA replication initiation complex once per cell cycle. Binds the DnaA box (a 9 base pair repeat at the origin) and separates the double-stranded (ds)DNA. Forms a right-handed helical filament on oriC DNA; dsDNA binds to the exterior of the filament while single-stranded (ss)DNA is stabiized in the filament's interior. The ATP-DnaA-oriC complex binds and stabilizes one strand of the AT-rich DNA unwinding element (DUE), permitting loading of DNA polymerase. After initiation quickly degrades to an ADP-DnaA complex that is not apt for DNA replication. Binds acidic phospholipids. This Burkholderia multivorans (strain ATCC 17616 / 249) protein is Chromosomal replication initiator protein DnaA.